Consider the following 576-residue polypeptide: Arginine--tRNA ligase (576 aa).

Residues Pro-122 to His-132 carry the 'HIGH' region motif.

It belongs to the class-I aminoacyl-tRNA synthetase family. In terms of assembly, monomer.

The protein localises to the cytoplasm. The enzyme catalyses tRNA(Arg) + L-arginine + ATP = L-arginyl-tRNA(Arg) + AMP + diphosphate. The protein is Arginine--tRNA ligase of Yersinia pseudotuberculosis serotype I (strain IP32953).